The primary structure comprises 127 residues: Phospholipase A2 homolog otoconin-22 (127 aa).

N-linked (GlcNAc...) asparagine glycosylation occurs at asparagine 20. Cystine bridges form between cysteine 26-cysteine 120, cysteine 28-cysteine 44, cysteine 43-cysteine 99, cysteine 49-cysteine 127, cysteine 50-cysteine 92, cysteine 59-cysteine 85, and cysteine 78-cysteine 90. N-linked (GlcNAc...) asparagine glycosylation occurs at asparagine 113.

It belongs to the phospholipase A2 family. Monomer. Otoconial membrane in the maculae of the saccule and utricle. Otoconia are composites of proteins and inorganic crystals formed in the peripheral portion of the vestibular system of vertebrates. The otoconial membranes contain small crystals of calcium carbonate known as otoliths (ear stones) if there is a single deposit or as otoconia (ear dust) if there are many. Each mineral polymorph of otoconia has a protein unique to that polymorph.

It localises to the secreted. In terms of biological role, major protein of the aragonitic otoconia. It is unlikely that this protein has phospholipase A2 activity. This chain is Phospholipase A2 homolog otoconin-22, found in Xenopus laevis (African clawed frog).